Reading from the N-terminus, the 252-residue chain is Chitooligosaccharide deacetylase (252 aa).

Mg(2+) is bound by residues His61 and His125.

The protein belongs to the YdjC deacetylase family. ChbG subfamily. Homodimer. The cofactor is Mg(2+).

Its subcellular location is the cytoplasm. The catalysed reaction is N,N'-diacetylchitobiose + H2O = N-acetyl-beta-D-glucosaminyl-(1-&gt;4)-D-glucosamine + acetate. It carries out the reaction diacetylchitobiose-6'-phosphate + H2O = N'-monoacetylchitobiose-6'-phosphate + acetate. It functions in the pathway glycan degradation; chitin degradation. Involved in the degradation of chitin. ChbG is essential for growth on the acetylated chitooligosaccharides chitobiose and chitotriose but is dispensable for growth on cellobiose and chitosan dimer, the deacetylated form of chitobiose. Deacetylation of chitobiose-6-P and chitotriose-6-P is necessary for both the activation of the chb promoter by the regulatory protein ChbR and the hydrolysis of phosphorylated beta-glucosides by the phospho-beta-glucosidase ChbF. Catalyzes the removal of only one acetyl group from chitobiose-6-P to yield monoacetylchitobiose-6-P, the inducer of ChbR and the substrate of ChbF. This Salmonella paratyphi B (strain ATCC BAA-1250 / SPB7) protein is Chitooligosaccharide deacetylase.